The sequence spans 121 residues: Putative membrane protein insertion efficiency factor (121 aa).

Residues 97 to 121 (VPARRDRHAGGRRCCPANVDEQRST) are disordered.

Belongs to the UPF0161 family.

Its subcellular location is the cell membrane. Functionally, could be involved in insertion of integral membrane proteins into the membrane. This is Putative membrane protein insertion efficiency factor from Rhodococcus jostii (strain RHA1).